The following is a 221-amino-acid chain: Large ribosomal subunit protein uL3 (221 aa).

Residues 131–165 form a disordered region; that stretch reads HNQSRGPETHGSRHHRRPGSMGPIKGKIKGKKLPG.

The protein belongs to the universal ribosomal protein uL3 family. In terms of assembly, part of the 50S ribosomal subunit. Forms a cluster with proteins L14 and L19.

Its function is as follows. One of the primary rRNA binding proteins, it binds directly near the 3'-end of the 23S rRNA, where it nucleates assembly of the 50S subunit. The protein is Large ribosomal subunit protein uL3 of Phytoplasma australiense.